A 54-amino-acid chain; its full sequence is Large ribosomal subunit protein bL33 (54 aa).

The protein belongs to the bacterial ribosomal protein bL33 family.

The chain is Large ribosomal subunit protein bL33 from Caldicellulosiruptor saccharolyticus (strain ATCC 43494 / DSM 8903 / Tp8T 6331).